The chain runs to 55 residues: Large ribosomal subunit protein bL33 (55 aa).

It belongs to the bacterial ribosomal protein bL33 family.

This is Large ribosomal subunit protein bL33 from Bradyrhizobium diazoefficiens (strain JCM 10833 / BCRC 13528 / IAM 13628 / NBRC 14792 / USDA 110).